We begin with the raw amino-acid sequence, 667 residues long: UvrABC system protein B (667 aa).

The Helicase ATP-binding domain occupies 25–180 (DSLQNQHRFQ…LLRALVSVQY (156 aa)). 38–45 (GATGTGKT) serves as a coordination point for ATP. The Beta-hairpin signature appears at 91-114 (YYDYYQPEAYIPVSDTYIEKSSSI). In terms of domain architecture, Helicase C-terminal spans 429-595 (QVDDLLGEIK…PIVKRSSNSI (167 aa)). The 36-residue stretch at 626–661 (PELIQQLEAQMKEAAKNLEFESAAKYRDRIKQLRDK) folds into the UVR domain.

It belongs to the UvrB family. In terms of assembly, forms a heterotetramer with UvrA during the search for lesions. Interacts with UvrC in an incision complex.

It localises to the cytoplasm. Functionally, the UvrABC repair system catalyzes the recognition and processing of DNA lesions. A damage recognition complex composed of 2 UvrA and 2 UvrB subunits scans DNA for abnormalities. Upon binding of the UvrA(2)B(2) complex to a putative damaged site, the DNA wraps around one UvrB monomer. DNA wrap is dependent on ATP binding by UvrB and probably causes local melting of the DNA helix, facilitating insertion of UvrB beta-hairpin between the DNA strands. Then UvrB probes one DNA strand for the presence of a lesion. If a lesion is found the UvrA subunits dissociate and the UvrB-DNA preincision complex is formed. This complex is subsequently bound by UvrC and the second UvrB is released. If no lesion is found, the DNA wraps around the other UvrB subunit that will check the other stand for damage. The sequence is that of UvrABC system protein B from Microcystis aeruginosa (strain NIES-843 / IAM M-2473).